A 258-amino-acid polypeptide reads, in one-letter code: ER membrane protein complex subunit 3 (258 aa).

The next 3 membrane-spanning stretches (helical) occupy residues 8 to 28, 123 to 143, and 173 to 193; these read PALR…IGIL, VVPQ…FILL, and SISW…LLLG.

It belongs to the EMC3 family.

The protein localises to the cytoplasm. It localises to the membrane. This chain is ER membrane protein complex subunit 3, found in Schizosaccharomyces pombe (strain 972 / ATCC 24843) (Fission yeast).